The primary structure comprises 201 residues: 3-isopropylmalate dehydratase small subunit (201 aa).

Belongs to the LeuD family. LeuD type 1 subfamily. As to quaternary structure, heterodimer of LeuC and LeuD.

It carries out the reaction (2R,3S)-3-isopropylmalate = (2S)-2-isopropylmalate. It functions in the pathway amino-acid biosynthesis; L-leucine biosynthesis; L-leucine from 3-methyl-2-oxobutanoate: step 2/4. Functionally, catalyzes the isomerization between 2-isopropylmalate and 3-isopropylmalate, via the formation of 2-isopropylmaleate. This Nitrobacter hamburgensis (strain DSM 10229 / NCIMB 13809 / X14) protein is 3-isopropylmalate dehydratase small subunit.